Here is a 432-residue protein sequence, read N- to C-terminus: Pachytene checkpoint protein 2 homolog (432 aa).

Residue M1 is modified to N-acetylmethionine. 179–186 is a binding site for ATP; that stretch reads GPPGTGKT.

It belongs to the AAA ATPase family. PCH2 subfamily. As to quaternary structure, specifically interacts with the ligand binding domain of the thyroid receptor (TR). This interaction does not require the presence of thyroid hormone for its interaction. Interacts with HPV16 E1. Interacts with proteasome subunit PSMA8; to participate in meiosis progression during spermatogenesis.

Functionally, plays a key role in chromosome recombination and chromosome structure development during meiosis. Required at early steps in meiotic recombination that leads to non-crossovers pathways. Also needed for efficient completion of homologous synapsis by influencing crossover distribution along the chromosomes affecting both crossovers and non-crossovers pathways. Also required for development of higher-order chromosome structures and is needed for synaptonemal-complex formation. In males, required for efficient synapsis of the sex chromosomes and for sex body formation. Promotes early steps of the DNA double-strand breaks (DSBs) repair process upstream of the assembly of RAD51 complexes. Required for depletion of HORMAD1 and HORMAD2 from synapsed chromosomes. Plays a role in mitotic spindle assembly checkpoint (SAC) activation. The protein is Pachytene checkpoint protein 2 homolog (TRIP13) of Homo sapiens (Human).